The chain runs to 218 residues: Protein N-lysine methyltransferase METTL21A (218 aa).

Residues tryptophan 47, 73-75 (GAG), aspartate 94, tryptophan 125, and alanine 143 contribute to the S-adenosyl-L-methionine site.

It belongs to the methyltransferase superfamily. METTL21 family. Interacts with heat shock protein 70 family members; at least some of these proteins are methylation substrates.

The protein localises to the cytoplasm. It catalyses the reaction L-lysyl-[protein] + 3 S-adenosyl-L-methionine = N(6),N(6),N(6)-trimethyl-L-lysyl-[protein] + 3 S-adenosyl-L-homocysteine + 3 H(+). Protein-lysine methyltransferase that selectively trimethylates residues in heat shock protein 70 (HSP70) family members. Contributes to the in vivo trimethylation of Lys residues in HSPA1 and HSPA8. In vitro methylates 'Lys-561' in HSPA1, 'Lys-564' in HSPA2, 'Lys-585' in HSPA5, 'Lys-563' in HSPA6 and 'Lys-561' in HSPA8. The protein is Protein N-lysine methyltransferase METTL21A (METTL21A) of Homo sapiens (Human).